Reading from the N-terminus, the 211-residue chain is Histidine biosynthesis bifunctional protein HisIE (211 aa).

The segment at 1–107 (MNKLIDFSKG…FNSEIESRFK (107 aa)) is phosphoribosyl-AMP cyclohydrolase. The interval 108-211 (IQALAQTIHQ…KGERKKVQEW (104 aa)) is phosphoribosyl-ATP pyrophosphohydrolase.

The protein in the N-terminal section; belongs to the PRA-CH family. It in the C-terminal section; belongs to the PRA-PH family.

The protein localises to the cytoplasm. It catalyses the reaction 1-(5-phospho-beta-D-ribosyl)-ATP + H2O = 1-(5-phospho-beta-D-ribosyl)-5'-AMP + diphosphate + H(+). It carries out the reaction 1-(5-phospho-beta-D-ribosyl)-5'-AMP + H2O = 1-(5-phospho-beta-D-ribosyl)-5-[(5-phospho-beta-D-ribosylamino)methylideneamino]imidazole-4-carboxamide. It functions in the pathway amino-acid biosynthesis; L-histidine biosynthesis; L-histidine from 5-phospho-alpha-D-ribose 1-diphosphate: step 2/9. Its pathway is amino-acid biosynthesis; L-histidine biosynthesis; L-histidine from 5-phospho-alpha-D-ribose 1-diphosphate: step 3/9. The sequence is that of Histidine biosynthesis bifunctional protein HisIE from Staphylococcus epidermidis (strain ATCC 12228 / FDA PCI 1200).